The primary structure comprises 188 residues: Elongation factor P (188 aa).

Lysine 34 carries the post-translational modification N6-(3,6-diaminohexanoyl)-5-hydroxylysine.

It belongs to the elongation factor P family. May be beta-lysylated on the epsilon-amino group of Lys-34 by the combined action of EpmA and EpmB, and then hydroxylated on the C5 position of the same residue by EpmC (if this protein is present). Lysylation is critical for the stimulatory effect of EF-P on peptide-bond formation. The lysylation moiety may extend toward the peptidyltransferase center and stabilize the terminal 3-CCA end of the tRNA. Hydroxylation of the C5 position on Lys-34 may allow additional potential stabilizing hydrogen-bond interactions with the P-tRNA.

It localises to the cytoplasm. Its pathway is protein biosynthesis; polypeptide chain elongation. In terms of biological role, involved in peptide bond synthesis. Alleviates ribosome stalling that occurs when 3 or more consecutive Pro residues or the sequence PPG is present in a protein, possibly by augmenting the peptidyl transferase activity of the ribosome. Modification of Lys-34 is required for alleviation. The polypeptide is Elongation factor P (Enterobacter sp. (strain 638)).